The sequence spans 341 residues: Thiamine-phosphate synthase (341 aa).

Residues 1–123 (MAVVEEQVVL…AAAAKEWRYR (123 aa)) are unknown. The tract at residues 61-80 (AARDTPHDPGTGLEHPDEGV) is disordered. Residues 124–341 (VYTLESTATG…AWFLERLNRG (218 aa)) form a thiamine-phosphate synthase region. 4-amino-2-methyl-5-(diphosphooxymethyl)pyrimidine-binding positions include 171 to 175 (QLREK) and asparagine 203. The Mg(2+) site is built by aspartate 204 and aspartate 223. Serine 242 is a 4-amino-2-methyl-5-(diphosphooxymethyl)pyrimidine binding site. 268 to 270 (TPT) contacts 2-[(2R,5Z)-2-carboxy-4-methylthiazol-5(2H)-ylidene]ethyl phosphate. Lysine 271 contributes to the 4-amino-2-methyl-5-(diphosphooxymethyl)pyrimidine binding site. Position 298 (glycine 298) interacts with 2-[(2R,5Z)-2-carboxy-4-methylthiazol-5(2H)-ylidene]ethyl phosphate.

Belongs to the thiamine-phosphate synthase family. The cofactor is Mg(2+).

The catalysed reaction is 2-[(2R,5Z)-2-carboxy-4-methylthiazol-5(2H)-ylidene]ethyl phosphate + 4-amino-2-methyl-5-(diphosphooxymethyl)pyrimidine + 2 H(+) = thiamine phosphate + CO2 + diphosphate. The enzyme catalyses 2-(2-carboxy-4-methylthiazol-5-yl)ethyl phosphate + 4-amino-2-methyl-5-(diphosphooxymethyl)pyrimidine + 2 H(+) = thiamine phosphate + CO2 + diphosphate. It carries out the reaction 4-methyl-5-(2-phosphooxyethyl)-thiazole + 4-amino-2-methyl-5-(diphosphooxymethyl)pyrimidine + H(+) = thiamine phosphate + diphosphate. It participates in cofactor biosynthesis; thiamine diphosphate biosynthesis; thiamine phosphate from 4-amino-2-methyl-5-diphosphomethylpyrimidine and 4-methyl-5-(2-phosphoethyl)-thiazole: step 1/1. Its function is as follows. Condenses 4-methyl-5-(beta-hydroxyethyl)thiazole monophosphate (THZ-P) and 2-methyl-4-amino-5-hydroxymethyl pyrimidine pyrophosphate (HMP-PP) to form thiamine monophosphate (TMP). The chain is Thiamine-phosphate synthase from Gloeobacter violaceus (strain ATCC 29082 / PCC 7421).